The primary structure comprises 355 residues: Probable nitronate monooxygenase (355 aa).

FMN is bound by residues N71, Q175, G180, G219, and 238 to 241 (QMGT).

The protein belongs to the nitronate monooxygenase family. NMO class I subfamily. Requires FMN as cofactor.

It catalyses the reaction 3 propionate 3-nitronate + 3 O2 + H2O = 3 3-oxopropanoate + 2 nitrate + nitrite + H2O2 + 3 H(+). Nitronate monooxygenase that uses molecular oxygen to catalyze the oxidative denitrification of alkyl nitronates. Acts on propionate 3-nitronate (P3N), the presumed physiological substrate. Probably functions in the detoxification of P3N, a metabolic poison produced by plants and fungi as a defense mechanism. The protein is Probable nitronate monooxygenase of Staphylococcus saprophyticus subsp. saprophyticus (strain ATCC 15305 / DSM 20229 / NCIMB 8711 / NCTC 7292 / S-41).